The chain runs to 331 residues: MINSDAQSAQKQVEVEKPDEKYSAPRLLPPIPDSYQPAKAITKIPATSSLEDILAILERDGGVILTDFVSLQELDKIDEELEPYTKSSIADDDSYNNFIGKKTLVIPGLVGKSDTIANILDTNETIDKLLKVILEERYPAVFEQHTEELVVDPLLSICMGFHVGHGSPRQALHRDDMIFSSKHRPDMKINEVDGFSCFLAGTRITRENGGTMVILGSHKWEHDRRGRPDEVSFLEMERGSAFIFLSTLAHGAGYNTIPGEVRKITNLVFCRGTLRTEENQFLCVPRSKVLKMSPKMQTLLGFKKPAGSWLGMVENEDPAKDLEAIYEKMLK.

Positions 1 to 11 (MINSDAQSAQK) are enriched in polar residues. A disordered region spans residues 1–31 (MINSDAQSAQKQVEVEKPDEKYSAPRLLPPI). Positions 13–23 (VEVEKPDEKYS) are enriched in basic and acidic residues. Fe cation-binding residues include histidine 173, aspartate 175, and histidine 250.

This sequence belongs to the PhyH family. In terms of assembly, homodimer. It depends on Fe cation as a cofactor.

Its pathway is mycotoxin biosynthesis. Its function is as follows. Dioxygenase; part of the gene cluster that mediates the biosynthesis of swainsonine (SW), a cytotoxic fungal alkaloid and a potential cancer therapy drug. Swainsonine production occurs via a multibranched pathway and is dispensable for fungal colonization of plants and infection of insect hosts. The first step of swainsonine biosynthesis is the production of the precursor pipecolic acid (PA) via conversion of L-lysine (Lys) to 1-piperideine-6-carboxylate (P6C) by the aminotransferase swnA, the latter being further reduced to PA by the reductase swnR. PA can be converted from lysine by both the SW biosynthetic cluster and the unclustered genes such as lysine cyclodeaminase. The PKS-NRPS hybrid synthetase swnK uptakes and condensates PA and malonyl-CoA with and without skipping of the ketoreductase (KR) domain in order to produce 3 intermediates, 1-oxoindolizidine, (1S)-1-hydroxyindolizin, and (1R)-1-hydroxyindolizine; with the transisomer (1S)-1-hydroxyindolizin being predominant. The terminal thioester reductase (TE) domain of swnK is involved in reduction of the thioester bond to release the intermediate aldehydes. The oxidoreductase swnN could contribute to the reduction of 1-oxoindolizidine to (1S)-1-hydroxyindolizin and (1R)-1-hydroxyindolizine, contributing to the major route of SW production. The dioxygenase swnH2 would be responsible for the oxidization of (1R)-1-hydroxyindolizine into (1R,2S)-1,2-dihydroxyindolizine and of (1S)-1-hydroxyindolizin to yield both (1R,2S)-1,2-dihydroxyindolizine and (1S,2S)-1,2-dihydroxyindolizine. The dioxygenase swnH1 then performs the conversion of the 1,2-dihydroxyindolizine epimers to SW. The sequence is that of Dioxygenase swnH2 from Metarhizium robertsii (strain ARSEF 23 / ATCC MYA-3075) (Metarhizium anisopliae (strain ARSEF 23)).